A 527-amino-acid chain; its full sequence is Peptide chain release factor 3 (527 aa).

The tr-type G domain maps to 9–277 (AKRRTFAIIS…AVVDWAPRPL (269 aa)). GTP contacts are provided by residues 18–25 (SHPDAGKT), 86–90 (DTPGH), and 140–143 (NKLD).

This sequence belongs to the TRAFAC class translation factor GTPase superfamily. Classic translation factor GTPase family. PrfC subfamily.

It localises to the cytoplasm. Functionally, increases the formation of ribosomal termination complexes and stimulates activities of RF-1 and RF-2. It binds guanine nucleotides and has strong preference for UGA stop codons. It may interact directly with the ribosome. The stimulation of RF-1 and RF-2 is significantly reduced by GTP and GDP, but not by GMP. The protein is Peptide chain release factor 3 of Pseudomonas fluorescens (strain Pf0-1).